Reading from the N-terminus, the 254-residue chain is Anamorsin homolog (254 aa).

The N-terminal SAM-like domain stretch occupies residues 4 to 132 (VQENNHVLYI…EIGSAAKLSL (129 aa)). A linker region spans residues 132–167 (LGGNKAKVAAVWKLDVDDDDDERIDEDELLDEEDKV). [2Fe-2S] cluster is bound by residues cysteine 177, cysteine 186, cysteine 189, and cysteine 191. A fe-S binding site A region spans residues 177–191 (CGTTGKRKACKDCSC). Residues cysteine 215, cysteine 218, cysteine 226, and cysteine 229 each contribute to the [4Fe-4S] cluster site. 2 short sequence motifs (cx2C motif) span residues 215-218 (CGSC) and 226-229 (CATC). The tract at residues 215-229 (CGSCYLGDAFRCATC) is fe-S binding site B.

Belongs to the anamorsin family. As to quaternary structure, monomer. [2Fe-2S] cluster serves as cofactor. The cofactor is [4Fe-4S] cluster.

It localises to the cytoplasm. The protein resides in the mitochondrion intermembrane space. Its function is as follows. Component of the cytosolic iron-sulfur (Fe-S) protein assembly (CIA) machinery. Required for the maturation of extramitochondrial Fe-S proteins. Part of an electron transfer chain functioning in an early step of cytosolic Fe-S biogenesis, facilitating the de novo assembly of a [4Fe-4S] cluster on the cytosolic Fe-S scaffold complex. Electrons are transferred from NADPH via a FAD- and FMN-containing diflavin oxidoreductase. Together with the diflavin oxidoreductase, also required for the assembly of the diferric tyrosyl radical cofactor of ribonucleotide reductase (RNR), probably by providing electrons for reduction during radical cofactor maturation in the catalytic small subunit. This is Anamorsin homolog from Aedes aegypti (Yellowfever mosquito).